The following is a 178-amino-acid chain: Large ribosomal subunit protein uL5 (178 aa).

Belongs to the universal ribosomal protein uL5 family. As to quaternary structure, part of the 50S ribosomal subunit; part of the 5S rRNA/L5/L18/L25 subcomplex. Contacts the 5S rRNA and the P site tRNA. Forms a bridge to the 30S subunit in the 70S ribosome.

Its function is as follows. This is one of the proteins that bind and probably mediate the attachment of the 5S RNA into the large ribosomal subunit, where it forms part of the central protuberance. In the 70S ribosome it contacts protein S13 of the 30S subunit (bridge B1b), connecting the 2 subunits; this bridge is implicated in subunit movement. Contacts the P site tRNA; the 5S rRNA and some of its associated proteins might help stabilize positioning of ribosome-bound tRNAs. The chain is Large ribosomal subunit protein uL5 from Syntrophomonas wolfei subsp. wolfei (strain DSM 2245B / Goettingen).